A 290-amino-acid chain; its full sequence is Acetyl-coenzyme A carboxylase carboxyl transferase subunit beta (290 aa).

A CoA carboxyltransferase N-terminal domain is found at 27–290 (LWHKCPSCEA…FTHSPSPVSA (264 aa)). The Zn(2+) site is built by Cys-31, Cys-34, Cys-50, and Cys-53. The segment at 31–53 (CPSCEAVLYRPELEKTLDVCPKC) adopts a C4-type zinc-finger fold.

This sequence belongs to the AccD/PCCB family. As to quaternary structure, acetyl-CoA carboxylase is a heterohexamer composed of biotin carboxyl carrier protein (AccB), biotin carboxylase (AccC) and two subunits each of ACCase subunit alpha (AccA) and ACCase subunit beta (AccD). Zn(2+) is required as a cofactor.

The protein localises to the cytoplasm. It catalyses the reaction N(6)-carboxybiotinyl-L-lysyl-[protein] + acetyl-CoA = N(6)-biotinyl-L-lysyl-[protein] + malonyl-CoA. It participates in lipid metabolism; malonyl-CoA biosynthesis; malonyl-CoA from acetyl-CoA: step 1/1. Component of the acetyl coenzyme A carboxylase (ACC) complex. Biotin carboxylase (BC) catalyzes the carboxylation of biotin on its carrier protein (BCCP) and then the CO(2) group is transferred by the transcarboxylase to acetyl-CoA to form malonyl-CoA. The polypeptide is Acetyl-coenzyme A carboxylase carboxyl transferase subunit beta (Pseudomonas paraeruginosa (strain DSM 24068 / PA7) (Pseudomonas aeruginosa (strain PA7))).